Reading from the N-terminus, the 270-residue chain is Elongation factor Ts (270 aa).

An involved in Mg(2+) ion dislocation from EF-Tu region spans residues 75-78 (TDFV).

This sequence belongs to the EF-Ts family.

It is found in the cytoplasm. Associates with the EF-Tu.GDP complex and induces the exchange of GDP to GTP. It remains bound to the aminoacyl-tRNA.EF-Tu.GTP complex up to the GTP hydrolysis stage on the ribosome. The polypeptide is Elongation factor Ts (Cutibacterium acnes (strain DSM 16379 / KPA171202) (Propionibacterium acnes)).